A 127-amino-acid polypeptide reads, in one-letter code: Glycine cleavage system H protein (127 aa).

Residues glutamate 22–lysine 104 enclose the Lipoyl-binding domain. The residue at position 63 (lysine 63) is an N6-lipoyllysine.

This sequence belongs to the GcvH family. In terms of assembly, the glycine cleavage system is composed of four proteins: P, T, L and H. Requires (R)-lipoate as cofactor.

In terms of biological role, the glycine cleavage system catalyzes the degradation of glycine. The H protein shuttles the methylamine group of glycine from the P protein to the T protein. The chain is Glycine cleavage system H protein from Nitratidesulfovibrio vulgaris (strain DP4) (Desulfovibrio vulgaris).